We begin with the raw amino-acid sequence, 366 residues long: tRNA-specific 2-thiouridylase MnmA (366 aa).

ATP-binding positions include 10-17 (GLSGGVDS) and Ile36. Residue Cys98 is the Nucleophile of the active site. An intrachain disulfide couples Cys98 to Cys194. Residue Gly122 participates in ATP binding. Residues 144–146 (KDQ) form an interaction with tRNA region. Residue Cys194 is the Cysteine persulfide intermediate of the active site. The tract at residues 303-304 (RY) is interaction with tRNA.

The protein belongs to the MnmA/TRMU family.

The protein resides in the cytoplasm. The catalysed reaction is S-sulfanyl-L-cysteinyl-[protein] + uridine(34) in tRNA + AH2 + ATP = 2-thiouridine(34) in tRNA + L-cysteinyl-[protein] + A + AMP + diphosphate + H(+). Its function is as follows. Catalyzes the 2-thiolation of uridine at the wobble position (U34) of tRNA, leading to the formation of s(2)U34. The protein is tRNA-specific 2-thiouridylase MnmA of Chlorobaculum tepidum (strain ATCC 49652 / DSM 12025 / NBRC 103806 / TLS) (Chlorobium tepidum).